A 378-amino-acid polypeptide reads, in one-letter code: Chorismate synthase (378 aa).

Arg-50 contributes to the NADP(+) binding site. FMN is bound by residues 127–129 (RAS), 255–256 (NA), Gly-300, 315–319 (KPTPS), and Arg-342.

This sequence belongs to the chorismate synthase family. FMNH2 serves as cofactor.

The catalysed reaction is 5-O-(1-carboxyvinyl)-3-phosphoshikimate = chorismate + phosphate. The protein operates within metabolic intermediate biosynthesis; chorismate biosynthesis; chorismate from D-erythrose 4-phosphate and phosphoenolpyruvate: step 7/7. Its function is as follows. Catalyzes the anti-1,4-elimination of the C-3 phosphate and the C-6 proR hydrogen from 5-enolpyruvylshikimate-3-phosphate (EPSP) to yield chorismate, which is the branch point compound that serves as the starting substrate for the three terminal pathways of aromatic amino acid biosynthesis. This reaction introduces a second double bond into the aromatic ring system. This Methanocaldococcus jannaschii (strain ATCC 43067 / DSM 2661 / JAL-1 / JCM 10045 / NBRC 100440) (Methanococcus jannaschii) protein is Chorismate synthase.